Reading from the N-terminus, the 283-residue chain is Pantothenate synthetase (283 aa).

30 to 37 serves as a coordination point for ATP; the sequence is MGNLHAGH. His37 serves as the catalytic Proton donor. (R)-pantoate is bound at residue Gln61. Gln61 serves as a coordination point for beta-alanine. 149 to 152 lines the ATP pocket; sequence GEKD. Residue Gln155 coordinates (R)-pantoate. Residues Val178 and 186-189 contribute to the ATP site; that span reads LSSR.

The protein belongs to the pantothenate synthetase family. As to quaternary structure, homodimer.

It localises to the cytoplasm. It catalyses the reaction (R)-pantoate + beta-alanine + ATP = (R)-pantothenate + AMP + diphosphate + H(+). It participates in cofactor biosynthesis; (R)-pantothenate biosynthesis; (R)-pantothenate from (R)-pantoate and beta-alanine: step 1/1. Catalyzes the condensation of pantoate with beta-alanine in an ATP-dependent reaction via a pantoyl-adenylate intermediate. The chain is Pantothenate synthetase from Pseudomonas aeruginosa (strain UCBPP-PA14).